The following is an 800-amino-acid chain: Ribosome-releasing factor 2, mitochondrial (800 aa).

In terms of domain architecture, tr-type G spans 21–307 (SKVRNIGIIA…AIANYLPSPS (287 aa)). GTP contacts are provided by residues 30–37 (AHIDAGKT), 95–99 (DTPGH), and 147–150 (NKMD).

This sequence belongs to the TRAFAC class translation factor GTPase superfamily. Classic translation factor GTPase family. EF-G/EF-2 subfamily.

It is found in the mitochondrion. Functionally, mitochondrial GTPase that mediates the disassembly of ribosomes from messenger RNA at the termination of mitochondrial protein biosynthesis. Not involved in the GTP-dependent ribosomal translocation step during translation elongation. The chain is Ribosome-releasing factor 2, mitochondrial from Kluyveromyces lactis (strain ATCC 8585 / CBS 2359 / DSM 70799 / NBRC 1267 / NRRL Y-1140 / WM37) (Yeast).